The chain runs to 238 residues: Pyridoxine 5'-phosphate synthase (238 aa).

Residue Asn7 participates in 3-amino-2-oxopropyl phosphate binding. 1-deoxy-D-xylulose 5-phosphate is bound at residue 9 to 10 (DH). Residue Arg18 coordinates 3-amino-2-oxopropyl phosphate. His43 (proton acceptor) is an active-site residue. 1-deoxy-D-xylulose 5-phosphate contacts are provided by Arg45 and His50. The active-site Proton acceptor is Glu70. Residue Thr100 participates in 1-deoxy-D-xylulose 5-phosphate binding. Catalysis depends on His190, which acts as the Proton donor. Residues Gly191 and 212-213 (GH) contribute to the 3-amino-2-oxopropyl phosphate site.

This sequence belongs to the PNP synthase family. Homooctamer; tetramer of dimers.

The protein resides in the cytoplasm. It carries out the reaction 3-amino-2-oxopropyl phosphate + 1-deoxy-D-xylulose 5-phosphate = pyridoxine 5'-phosphate + phosphate + 2 H2O + H(+). It functions in the pathway cofactor biosynthesis; pyridoxine 5'-phosphate biosynthesis; pyridoxine 5'-phosphate from D-erythrose 4-phosphate: step 5/5. Its function is as follows. Catalyzes the complicated ring closure reaction between the two acyclic compounds 1-deoxy-D-xylulose-5-phosphate (DXP) and 3-amino-2-oxopropyl phosphate (1-amino-acetone-3-phosphate or AAP) to form pyridoxine 5'-phosphate (PNP) and inorganic phosphate. The protein is Pyridoxine 5'-phosphate synthase of Prochlorococcus marinus (strain AS9601).